The sequence spans 373 residues: Putative aminopeptidase SgcX (373 aa).

A divalent metal cation-binding residues include histidine 67 and aspartate 180. Glutamate 212 (proton acceptor) is an active-site residue. Residues glutamate 213, aspartate 235, and histidine 329 each coordinate a divalent metal cation.

It belongs to the peptidase M42 family. Requires a divalent metal cation as cofactor.

The chain is Putative aminopeptidase SgcX (sgcX) from Escherichia coli (strain K12).